The sequence spans 801 residues: Endonuclease MutS2 (801 aa).

ATP is bound at residue 336 to 343 (GPNTGGKT). The interval 696–721 (AQQSKAKQKQQKIVKTKTASGSARAT) is disordered. Over residues 701–710 (AKQKQQKIVK) the composition is skewed to basic residues. A Smr domain is found at 726–801 (LDLRGVRYEA…GDGATIAELS (76 aa)).

It belongs to the DNA mismatch repair MutS family. MutS2 subfamily. As to quaternary structure, homodimer. Binds to stalled ribosomes, contacting rRNA.

In terms of biological role, endonuclease that is involved in the suppression of homologous recombination and thus may have a key role in the control of bacterial genetic diversity. Functionally, acts as a ribosome collision sensor, splitting the ribosome into its 2 subunits. Detects stalled/collided 70S ribosomes which it binds and splits by an ATP-hydrolysis driven conformational change. Acts upstream of the ribosome quality control system (RQC), a ribosome-associated complex that mediates the extraction of incompletely synthesized nascent chains from stalled ribosomes and their subsequent degradation. Probably generates substrates for RQC. The protein is Endonuclease MutS2 of Leuconostoc citreum (strain KM20).